The sequence spans 61 residues: UPF0391 membrane protein Ajs_0703 (61 aa).

2 helical membrane-spanning segments follow: residues 5–25 (AIIF…GVAA) and 33–53 (VLFV…LLGI).

This sequence belongs to the UPF0391 family.

It is found in the cell membrane. In Acidovorax sp. (strain JS42), this protein is UPF0391 membrane protein Ajs_0703.